A 340-amino-acid chain; its full sequence is Probable serine acetyltransferase 5 (340 aa).

Low complexity-rich tracts occupy residues 1–17 and 54–64; these read MLVV…RVAA and PAEVVPAFAPP. The segment at 1-67 is disordered; the sequence is MLVVVARKSS…VPAFAPPESE (67 aa).

It belongs to the transferase hexapeptide repeat family. As to quaternary structure, homomultimer.

It carries out the reaction L-serine + acetyl-CoA = O-acetyl-L-serine + CoA. The protein operates within amino-acid biosynthesis; L-cysteine biosynthesis; L-cysteine from L-serine: step 1/2. The polypeptide is Probable serine acetyltransferase 5 (SAT5) (Oryza sativa subsp. japonica (Rice)).